The primary structure comprises 344 residues: Heat-inducible transcription repressor HrcA (344 aa).

It belongs to the HrcA family.

Its function is as follows. Negative regulator of class I heat shock genes (grpE-dnaK-dnaJ and groELS operons). Prevents heat-shock induction of these operons. The polypeptide is Heat-inducible transcription repressor HrcA (Streptococcus uberis (strain ATCC BAA-854 / 0140J)).